Consider the following 430-residue polypeptide: Serine--tRNA ligase (430 aa).

237-239 (TAE) contacts L-serine. 268–270 (RSE) is a binding site for ATP. E291 lines the L-serine pocket. 355–358 (EISS) is a binding site for ATP. S391 contacts L-serine.

This sequence belongs to the class-II aminoacyl-tRNA synthetase family. Type-1 seryl-tRNA synthetase subfamily. As to quaternary structure, homodimer. The tRNA molecule binds across the dimer.

It localises to the cytoplasm. The enzyme catalyses tRNA(Ser) + L-serine + ATP = L-seryl-tRNA(Ser) + AMP + diphosphate + H(+). It catalyses the reaction tRNA(Sec) + L-serine + ATP = L-seryl-tRNA(Sec) + AMP + diphosphate + H(+). The protein operates within aminoacyl-tRNA biosynthesis; selenocysteinyl-tRNA(Sec) biosynthesis; L-seryl-tRNA(Sec) from L-serine and tRNA(Sec): step 1/1. Its function is as follows. Catalyzes the attachment of serine to tRNA(Ser). Is also able to aminoacylate tRNA(Sec) with serine, to form the misacylated tRNA L-seryl-tRNA(Sec), which will be further converted into selenocysteinyl-tRNA(Sec). This Salmonella schwarzengrund (strain CVM19633) protein is Serine--tRNA ligase.